A 397-amino-acid polypeptide reads, in one-letter code: Phosphoglycerate kinase (397 aa).

Substrate is bound by residues 21–23 (DFN), R37, 60–63 (HLGR), R119, and R152. Residues K203, G294, E325, and 354–357 (GGDS) contribute to the ATP site.

The protein belongs to the phosphoglycerate kinase family. Monomer.

The protein resides in the cytoplasm. The catalysed reaction is (2R)-3-phosphoglycerate + ATP = (2R)-3-phospho-glyceroyl phosphate + ADP. It functions in the pathway carbohydrate degradation; glycolysis; pyruvate from D-glyceraldehyde 3-phosphate: step 2/5. This chain is Phosphoglycerate kinase, found in Chlorobium phaeobacteroides (strain BS1).